The sequence spans 30 residues: Chassatide C9 (30 aa).

Residues 1 to 30 (GIPCGESCVFIPCVTTVIGCSCKDKVCYNN) constitute a cross-link (cyclopeptide (Gly-Asn)). 3 disulfide bridges follow: C4-C20, C8-C22, and C13-C27.

This is a cyclic peptide.

In terms of biological role, probably participates in a plant defense mechanism. The polypeptide is Chassatide C9 (Chassalia chartacea (Chassalia curviflora)).